A 484-amino-acid polypeptide reads, in one-letter code: Cysteine desulfurase, mitochondrial (484 aa).

A compositionally biased stretch (low complexity) spans leucine 29–serine 42. Residues leucine 29 to serine 69 are disordered. Residues alanine 153–threonine 154, asparagine 233, glutamine 261, and serine 281–histidine 283 each bind pyridoxal 5'-phosphate. Residue lysine 284 is modified to N6-(pyridoxal phosphate)lysine. Threonine 321 serves as a coordination point for pyridoxal 5'-phosphate. Cysteine 408 serves as the catalytic Cysteine persulfide intermediate. Cysteine 408 serves as a coordination point for [2Fe-2S] cluster.

Belongs to the class-V pyridoxal-phosphate-dependent aminotransferase family. NifS/IscS subfamily. It depends on pyridoxal 5'-phosphate as a cofactor.

The protein resides in the mitochondrion. The catalysed reaction is (sulfur carrier)-H + L-cysteine = (sulfur carrier)-SH + L-alanine. Its function is as follows. Catalyzes the removal of elemental sulfur from cysteine to produce alanine. It supplies the inorganic sulfur for iron-sulfur (Fe-S) clusters. Plays a role in both tRNA-processing and mitochondrial metabolism. Involved in the 2-thio-modification of both 5-carboxymethylaminomethyl-2-thiouridine in mitochondrial tRNAs and 5-methoxycarbonylmethyl-2-thiouridine (mcm5s2U) in cytoplasmic tRNAs. The protein is Cysteine desulfurase, mitochondrial of Candida maltosa (Yeast).